A 65-amino-acid chain; its full sequence is Large ribosomal subunit protein uL29 (65 aa).

Belongs to the universal ribosomal protein uL29 family.

The sequence is that of Large ribosomal subunit protein uL29 from Paracidovorax citrulli (strain AAC00-1) (Acidovorax citrulli).